Consider the following 1004-residue polypeptide: Translation initiation factor IF-2 (1004 aa).

Positions 36–393 (SSTIEPPVVK…RQKRNEYESM (358 aa)) are disordered. Composition is skewed to low complexity over residues 62–157 (AAKP…AKPA) and 173–183 (AAKPGAEAPRP). Pro residues-rich tracts occupy residues 184 to 196 (GGMPRPMGKPAPK) and 219 to 236 (PRPGGGPRPGGGPRPGGG). 2 stretches are compositionally biased toward gly residues: residues 237 to 249 (PRPQGQGRPGGQR) and 261 to 277 (GNRGGQRQGAGAGGPRP). A compositionally biased stretch (low complexity) spans 279–303 (GGPRPQGGSRPQGGSAQGAQGAPSQ). The segment covering 330–373 (GKGGRGGQAGGGAGGGFNRGGGTGGGAGRGGRRGGTAGAFGRPG) has biased composition (gly residues). Residues 377–386 (RRGRKSKRQK) show a composition bias toward basic residues. Positions 499 to 671 (KRPPVVTVMG…VCLTADAELD (173 aa)) constitute a tr-type G domain. The interval 508-515 (GHVDHGKT) is G1. A GTP-binding site is contributed by 508–515 (GHVDHGKT). Residues 533–537 (GITQG) are G2. The interval 558–561 (DTPG) is G3. GTP is bound by residues 558-562 (DTPGH) and 612-615 (NKID). Residues 612-615 (NKID) are G4. A G5 region spans residues 648–650 (SAK).

The protein belongs to the TRAFAC class translation factor GTPase superfamily. Classic translation factor GTPase family. IF-2 subfamily.

The protein localises to the cytoplasm. Functionally, one of the essential components for the initiation of protein synthesis. Protects formylmethionyl-tRNA from spontaneous hydrolysis and promotes its binding to the 30S ribosomal subunits. Also involved in the hydrolysis of GTP during the formation of the 70S ribosomal complex. The chain is Translation initiation factor IF-2 from Corynebacterium glutamicum (strain ATCC 13032 / DSM 20300 / JCM 1318 / BCRC 11384 / CCUG 27702 / LMG 3730 / NBRC 12168 / NCIMB 10025 / NRRL B-2784 / 534).